The sequence spans 132 residues: Large ribosomal subunit protein bL17 (132 aa).

This sequence belongs to the bacterial ribosomal protein bL17 family. Part of the 50S ribosomal subunit. Contacts protein L32.

In Polaromonas sp. (strain JS666 / ATCC BAA-500), this protein is Large ribosomal subunit protein bL17.